Here is a 249-residue protein sequence, read N- to C-terminus: Serine 3-dehydrogenase (249 aa).

Residue 6 to 30 participates in NADP(+) binding; the sequence is LITGATSGFGQATAQRFVKEGWKVI. S135 is a substrate binding site. Y148 functions as the Proton acceptor in the catalytic mechanism.

This sequence belongs to the short-chain dehydrogenases/reductases (SDR) family. As to quaternary structure, homotetramer.

It carries out the reaction L-serine + NADP(+) = aminoacetaldehyde + CO2 + NADPH. Functionally, catalyzes the oxidation of the hydroxyl group of serine to form 2-aminomalonate semialdehyde which is spontaneously converted into 2-aminoacetaldehyde and CO(2). Also acts on D-serine, L-glycerate, D-glycerate and 2-methyl-DL-serine. Does not act on O-methyl-DL-serine and L-threonine. The protein is Serine 3-dehydrogenase (sdh) of Rhizobium radiobacter (Agrobacterium tumefaciens).